A 136-amino-acid polypeptide reads, in one-letter code: MQVEGFEFPDELYYYPEEHVWVKIEGDMVTVGITSLGQYMAGKIFQVTTKNKGEKVTPKSVIFTLESAKWIGKFRLPVEGEIVDINDEVVKNPTLINEKPYDAWIVKIKGDIKKEKLLPVSEAVKIFENDAKRVIR.

Residues 28–109 enclose the Lipoyl-binding domain; that stretch reads MVTVGITSLG…PYDAWIVKIK (82 aa). K69 is modified (N6-lipoyllysine).

It belongs to the GcvH family. As to quaternary structure, the glycine cleavage system is composed of four proteins: P, T, L and H. (R)-lipoate serves as cofactor.

In terms of biological role, the glycine cleavage system catalyzes the degradation of glycine. The H protein shuttles the methylamine group of glycine from the P protein to the T protein. This Sulfurisphaera tokodaii (strain DSM 16993 / JCM 10545 / NBRC 100140 / 7) (Sulfolobus tokodaii) protein is Probable glycine cleavage system H protein 3.